The chain runs to 342 residues: 4-hydroxy-2-oxovalerate aldolase (342 aa).

The 253-residue stretch at 5-257 folds into the Pyruvate carboxyltransferase domain; it reads ITLHDMTLRD…DTGVDVWKIQ (253 aa). 13–14 contributes to the substrate binding site; sequence RD. Residue Asp-14 coordinates Mn(2+). The active-site Proton acceptor is His-17. The substrate site is built by Ser-167 and His-196. The Mn(2+) site is built by His-196 and His-198. Tyr-287 is a substrate binding site.

The protein belongs to the 4-hydroxy-2-oxovalerate aldolase family.

It catalyses the reaction (S)-4-hydroxy-2-oxopentanoate = acetaldehyde + pyruvate. This chain is 4-hydroxy-2-oxovalerate aldolase, found in Acidovorax sp. (strain JS42).